Reading from the N-terminus, the 166-residue chain is Phosphopantetheine adenylyltransferase (166 aa).

Ser11 is a substrate binding site. ATP is bound by residues 11–12 and His19; that span reads SF. Substrate-binding residues include Lys43, Val80, and Arg94. ATP is bound by residues 95–97, Glu105, and 130–136; these read GLR and VRTITAT.

Belongs to the bacterial CoaD family. As to quaternary structure, homohexamer. The cofactor is Mg(2+).

Its subcellular location is the cytoplasm. The enzyme catalyses (R)-4'-phosphopantetheine + ATP + H(+) = 3'-dephospho-CoA + diphosphate. The protein operates within cofactor biosynthesis; coenzyme A biosynthesis; CoA from (R)-pantothenate: step 4/5. Its function is as follows. Reversibly transfers an adenylyl group from ATP to 4'-phosphopantetheine, yielding dephospho-CoA (dPCoA) and pyrophosphate. The protein is Phosphopantetheine adenylyltransferase of Mesorhizobium japonicum (strain LMG 29417 / CECT 9101 / MAFF 303099) (Mesorhizobium loti (strain MAFF 303099)).